The primary structure comprises 124 residues: Small ribosomal subunit protein uS12 (124 aa).

Positions serine 105 to serine 124 are disordered. Positions glycine 113–serine 124 are enriched in basic residues.

It belongs to the universal ribosomal protein uS12 family. As to quaternary structure, part of the 30S ribosomal subunit. Contacts proteins S8 and S17. May interact with IF1 in the 30S initiation complex.

With S4 and S5 plays an important role in translational accuracy. Its function is as follows. Interacts with and stabilizes bases of the 16S rRNA that are involved in tRNA selection in the A site and with the mRNA backbone. Located at the interface of the 30S and 50S subunits, it traverses the body of the 30S subunit contacting proteins on the other side and probably holding the rRNA structure together. The combined cluster of proteins S8, S12 and S17 appears to hold together the shoulder and platform of the 30S subunit. The polypeptide is Small ribosomal subunit protein uS12 (Idiomarina loihiensis (strain ATCC BAA-735 / DSM 15497 / L2-TR)).